A 401-amino-acid polypeptide reads, in one-letter code: Ribosomal protein uS12 methylthiotransferase RimO (401 aa).

The region spanning 1–108 is the MTTase N-terminal domain; that stretch reads MKINFINLGC…GIELLQTPKR (108 aa). Positions 10, 43, 72, 124, 128, and 131 each coordinate [4Fe-4S] cluster. A Radical SAM core domain is found at 110-339; it reads LTTKHYAYLK…FNLSQEILEE (230 aa).

Belongs to the methylthiotransferase family. RimO subfamily. It depends on [4Fe-4S] cluster as a cofactor.

The protein resides in the cytoplasm. The catalysed reaction is L-aspartate(89)-[ribosomal protein uS12]-hydrogen + (sulfur carrier)-SH + AH2 + 2 S-adenosyl-L-methionine = 3-methylsulfanyl-L-aspartate(89)-[ribosomal protein uS12]-hydrogen + (sulfur carrier)-H + 5'-deoxyadenosine + L-methionine + A + S-adenosyl-L-homocysteine + 2 H(+). In terms of biological role, catalyzes the methylthiolation of an aspartic acid residue of ribosomal protein uS12. In Hydrogenobaculum sp. (strain Y04AAS1), this protein is Ribosomal protein uS12 methylthiotransferase RimO.